Consider the following 373-residue polypeptide: DNA replication and repair protein RecF (373 aa).

30–37 (GANGSGKT) serves as a coordination point for ATP.

This sequence belongs to the RecF family.

It localises to the cytoplasm. In terms of biological role, the RecF protein is involved in DNA metabolism; it is required for DNA replication and normal SOS inducibility. RecF binds preferentially to single-stranded, linear DNA. It also seems to bind ATP. This chain is DNA replication and repair protein RecF, found in Marinobacter nauticus (strain ATCC 700491 / DSM 11845 / VT8) (Marinobacter aquaeolei).